A 329-amino-acid polypeptide reads, in one-letter code: Replication factor C small subunit 1 (329 aa).

44-51 (GPPGTGKT) serves as a coordination point for ATP.

This sequence belongs to the activator 1 small subunits family. RfcS subfamily. As to quaternary structure, heteromultimer composed of small subunits (RfcS) and large subunits (RfcL).

Functionally, part of the RFC clamp loader complex which loads the PCNA sliding clamp onto DNA. In Pyrobaculum aerophilum (strain ATCC 51768 / DSM 7523 / JCM 9630 / CIP 104966 / NBRC 100827 / IM2), this protein is Replication factor C small subunit 1.